Reading from the N-terminus, the 513-residue chain is Glycerol-3-phosphate dehydrogenase (513 aa).

16–44 (DVAVIGGGINGVGIAADAAGRGLSVFLCE) contributes to the FAD binding site.

This sequence belongs to the FAD-dependent glycerol-3-phosphate dehydrogenase family. FAD is required as a cofactor.

Its subcellular location is the cytoplasm. The enzyme catalyses a quinone + sn-glycerol 3-phosphate = dihydroxyacetone phosphate + a quinol. The protein is Glycerol-3-phosphate dehydrogenase (glpD) of Pseudomonas tolaasii.